The chain runs to 249 residues: Isoprenyl transferase (249 aa).

The active site involves Asp25. Asp25 is a Mg(2+) binding site. Substrate-binding positions include 26-29 (GNGR), Trp30, Arg38, His42, and 70-72 (STE). Asn73 acts as the Proton acceptor in catalysis. Residues Trp74, Arg76, Arg197, and 203-205 (RLS) each bind substrate. Residue Glu216 coordinates Mg(2+).

Belongs to the UPP synthase family. As to quaternary structure, homodimer. It depends on Mg(2+) as a cofactor.

Functionally, catalyzes the condensation of isopentenyl diphosphate (IPP) with allylic pyrophosphates generating different type of terpenoids. In Streptococcus pyogenes serotype M3 (strain ATCC BAA-595 / MGAS315), this protein is Isoprenyl transferase.